A 191-amino-acid polypeptide reads, in one-letter code: Holliday junction branch migration complex subunit RuvA (191 aa).

The segment at 1 to 64 is domain I; sequence MIGTLSGIIE…DNVPQLYGFT (64 aa). The tract at residues 65 to 145 is domain II; it reads DTEEQNCLKM…FNIMDKRGPS (81 aa). The segment at 146–149 is flexible linker; it reads VEDS. Positions 149–191 are domain III; sequence SDALSALLSLGYEKTRVLNALEKVGVSHNLSDTVRFALKELSK.

It belongs to the RuvA family. As to quaternary structure, homotetramer. Forms an RuvA(8)-RuvB(12)-Holliday junction (HJ) complex. HJ DNA is sandwiched between 2 RuvA tetramers; dsDNA enters through RuvA and exits via RuvB. An RuvB hexamer assembles on each DNA strand where it exits the tetramer. Each RuvB hexamer is contacted by two RuvA subunits (via domain III) on 2 adjacent RuvB subunits; this complex drives branch migration. In the full resolvosome a probable DNA-RuvA(4)-RuvB(12)-RuvC(2) complex forms which resolves the HJ.

It is found in the cytoplasm. Its function is as follows. The RuvA-RuvB-RuvC complex processes Holliday junction (HJ) DNA during genetic recombination and DNA repair, while the RuvA-RuvB complex plays an important role in the rescue of blocked DNA replication forks via replication fork reversal (RFR). RuvA specifically binds to HJ cruciform DNA, conferring on it an open structure. The RuvB hexamer acts as an ATP-dependent pump, pulling dsDNA into and through the RuvAB complex. HJ branch migration allows RuvC to scan DNA until it finds its consensus sequence, where it cleaves and resolves the cruciform DNA. The polypeptide is Holliday junction branch migration complex subunit RuvA (Anaplasma phagocytophilum (strain HZ)).